The sequence spans 310 residues: MKTLTRKISRTVITLLLVIIAIVLIFRIWVFYTESPWTRDAKFTADVVAIAPDVSGLISEVRVRDNQLVQKDQVLFTIDPPRYQKALDEAQADVAYYQAVMGEKRREAARRNQLGVSAMSREAIEQANNDYQTTEHQLAKAVASRDLAQLDLERTVVKAPSAGWVTNLNVYTGEFITRGSTSVALVKQNSFYVLAYLEETKLEGIRPGYRVEITPLGSNQVLRGSVDSIAAGVTNSSSTVDSKGMATIDSNLEWVRLAQRVPVRIHLDSQPGNQYPSGTTATVVVTGAQDRKDNDMPPLMKLIHRLREFG.

The chain crosses the membrane as a helical span at residues 12 to 32; sequence VITLLLVIIAIVLIFRIWVFY.

Belongs to the membrane fusion protein (MFP) (TC 8.A.1) family.

Its subcellular location is the cell inner membrane. In terms of biological role, forms an efflux pump with AaeB. This chain is p-hydroxybenzoic acid efflux pump subunit AaeA, found in Erwinia tasmaniensis (strain DSM 17950 / CFBP 7177 / CIP 109463 / NCPPB 4357 / Et1/99).